Consider the following 311-residue polypeptide: Acetyl-coenzyme A carboxylase carboxyl transferase subunit alpha (311 aa).

The region spanning 34–286 (EKDLQKEASK…KEYYLQNIRE (253 aa)) is the CoA carboxyltransferase C-terminal domain.

The protein belongs to the AccA family. As to quaternary structure, acetyl-CoA carboxylase is a heterohexamer composed of biotin carboxyl carrier protein (AccB), biotin carboxylase (AccC) and two subunits each of ACCase subunit alpha (AccA) and ACCase subunit beta (AccD).

Its subcellular location is the cytoplasm. The catalysed reaction is N(6)-carboxybiotinyl-L-lysyl-[protein] + acetyl-CoA = N(6)-biotinyl-L-lysyl-[protein] + malonyl-CoA. It functions in the pathway lipid metabolism; malonyl-CoA biosynthesis; malonyl-CoA from acetyl-CoA: step 1/1. In terms of biological role, component of the acetyl coenzyme A carboxylase (ACC) complex. First, biotin carboxylase catalyzes the carboxylation of biotin on its carrier protein (BCCP) and then the CO(2) group is transferred by the carboxyltransferase to acetyl-CoA to form malonyl-CoA. The protein is Acetyl-coenzyme A carboxylase carboxyl transferase subunit alpha of Nitratiruptor sp. (strain SB155-2).